The chain runs to 506 residues: Protein spinster homolog 1 (506 aa).

A disordered region spans residues Met-1–Val-42. The segment covering Pro-21–Leu-30 has biased composition (low complexity). Helical transmembrane passes span Ile-52–Val-71, Gly-87–Leu-107, Leu-115–Gly-135, Val-149–Val-169, Met-176–Ser-196, Trp-207–Val-227, Phe-266–Leu-286, Leu-310–Ala-330, Leu-344–Ala-364, Val-373–Leu-393, Phe-408–Val-428, and Leu-450–Ile-470.

This sequence belongs to the major facilitator superfamily. Spinster (TC 2.A.1.49) family. In terms of tissue distribution, expressed in yolk cells.

The protein localises to the lysosome membrane. The enzyme catalyses a 1-acyl-sn-glycero-3-phosphocholine(out) + H(+)(out) = a 1-acyl-sn-glycero-3-phosphocholine(in) + H(+)(in). It carries out the reaction a 1-acyl-sn-glycero-3-phosphoethanolamine(out) + H(+)(out) = a 1-acyl-sn-glycero-3-phosphoethanolamine(in) + H(+)(in). The catalysed reaction is a 1-O-(1Z-alkenyl)-sn-glycero-3-phosphocholine(out) + H(+)(out) = a 1-O-(1Z-alkenyl)-sn-glycero-3-phosphocholine(in) + H(+)(in). It catalyses the reaction a 1-O-(1Z-alkenyl)-sn-glycero-3-phosphoethanolamine(out) + H(+)(out) = a 1-O-(1Z-alkenyl)-sn-glycero-3-phosphoethanolamine(in) + H(+)(in). In terms of biological role, mediates the rate-limiting, proton-dependent, lysosomal efflux of lysophospholipids. Selective for zwitterionic headgroups such as lysophosphatidylcholine (LPC) and lysophosphatidylethanolamine (LPE). Essential player in lysosomal homeostasis. Critical for embryogenesis. Involved in the regulation of developmental senescence. This chain is Protein spinster homolog 1 (spns1), found in Danio rerio (Zebrafish).